The primary structure comprises 434 residues: Xylose isomerase (434 aa).

Active-site residues include histidine 100 and aspartate 103. Residues glutamate 231, glutamate 267, histidine 270, aspartate 295, aspartate 306, aspartate 308, and aspartate 338 each coordinate Mg(2+).

This sequence belongs to the xylose isomerase family. As to quaternary structure, homotetramer. Requires Mg(2+) as cofactor.

It is found in the cytoplasm. The catalysed reaction is alpha-D-xylose = alpha-D-xylulofuranose. This chain is Xylose isomerase, found in Ruegeria pomeroyi (strain ATCC 700808 / DSM 15171 / DSS-3) (Silicibacter pomeroyi).